We begin with the raw amino-acid sequence, 197 residues long: MIILGLTGSIAMGKSTVSRLFAQMKRPVFDADKVVHQLQAPNGRLLSAIGQAFPGVIDEKGVNRQKLGAQLLQKPEGFRRLEAIIHPAVVEELHLFLRKNRSHPLVIVDIPLLFEAGFTRSVDYIAVVSAPYWIQKRRAVSRPNMTESRFRGLLARQWPDRKKRQQADFIIENGRNIIALAAQVRQITGCLVGQGSR.

Residues 3–197 (ILGLTGSIAM…TGCLVGQGSR (195 aa)) form the DPCK domain. ATP is bound at residue 11-16 (AMGKST).

It belongs to the CoaE family.

The protein localises to the cytoplasm. The catalysed reaction is 3'-dephospho-CoA + ATP = ADP + CoA + H(+). It participates in cofactor biosynthesis; coenzyme A biosynthesis; CoA from (R)-pantothenate: step 5/5. Functionally, catalyzes the phosphorylation of the 3'-hydroxyl group of dephosphocoenzyme A to form coenzyme A. This is Dephospho-CoA kinase from Zymomonas mobilis subsp. mobilis (strain ATCC 31821 / ZM4 / CP4).